The sequence spans 132 residues: DNA-directed RNA polymerase subunit omega (132 aa).

Residues 89–109 (HSSESESIFNTSSQEEGTSFD) are disordered. Positions 96–105 (IFNTSSQEEG) are enriched in polar residues.

This sequence belongs to the RNA polymerase subunit omega family. As to quaternary structure, the RNAP catalytic core consists of 2 alpha, 1 beta, 1 beta' and 1 omega subunit. When a sigma factor is associated with the core the holoenzyme is formed, which can initiate transcription.

It carries out the reaction RNA(n) + a ribonucleoside 5'-triphosphate = RNA(n+1) + diphosphate. In terms of biological role, promotes RNA polymerase assembly. Latches the N- and C-terminal regions of the beta' subunit thereby facilitating its interaction with the beta and alpha subunits. In Bartonella tribocorum (strain CIP 105476 / IBS 506), this protein is DNA-directed RNA polymerase subunit omega.